The sequence spans 883 residues: Pyruvate, phosphate dikinase 2 (883 aa).

A disordered region spans residues 1–21 (MAPAPCGRSSQRVFHFGKGKS). H465 functions as the Tele-phosphohistidine intermediate in the catalytic mechanism. 7 residues coordinate substrate: R571, R628, E757, G778, T779, N780, and D781. E757 contacts Mg(2+). D781 contributes to the Mg(2+) binding site. C843 (proton donor) is an active-site residue.

It belongs to the PEP-utilizing enzyme family. It depends on Mg(2+) as a cofactor. As to expression, expressed in leaves, roots and stems.

It localises to the cytoplasm. The catalysed reaction is pyruvate + phosphate + ATP = phosphoenolpyruvate + AMP + diphosphate + H(+). Functionally, formation of phosphoenolpyruvate, which is the primary acceptor of CO(2) in C4 and some Crassulacean acid metabolism plants. The sequence is that of Pyruvate, phosphate dikinase 2 from Zea mays (Maize).